Reading from the N-terminus, the 395-residue chain is Bone morphogenetic protein 2 (395 aa).

Positions 1–23 (MVAGTRCLLALLLPQVLLGGAAG) are cleaved as a signal peptide. Positions 24–281 (LIPELGRRKF…GHPLHRREKR (258 aa)) are cleaved as a propeptide — cleaved by PCSK5. Residue Ser86 is modified to Phosphoserine. Residues Asn134 and Asn199 are each glycosylated (N-linked (GlcNAc...) asparagine). The disordered stretch occupies residues 270–292 (GKGHPLHRREKRQAKHKQRKRLK). The span at 273–292 (HPLHRREKRQAKHKQRKRLK) shows a compositional bias: basic residues. Intrachain disulfides connect Cys295–Cys360, Cys324–Cys392, and Cys328–Cys394. A glycan (N-linked (GlcNAc...) asparagine) is linked at Asn337.

The protein belongs to the TGF-beta family. Homodimer; disulfide-linked. Interacts with SOSTDC1. Interacts with GREM2, RGMA, RGMB and RGMC. Interacts with ASPN. Interacts with MAFP5. Interacts with FBN1 (via N-terminal domain) and FBN2. Interacts with type I receptor BMPR1A. Interacts with type II receptor BMPR2. Interacts with SCUBE3. Interacts with TNFAIP6 (primarily via Link domain); this interaction is inhibited by hyaluronan. Interacts with ERFE. Interacts with BMPR1A/ALK3; the interaction may induce HAMP expression. Forms heterodimers with BMP6 in vitro; the heterodimer then binds to its receptor BMPR1A /ALK3 and may induce HAMP expression. Interacts with TGFBR3.

It localises to the secreted. In terms of biological role, growth factor of the TGF-beta superfamily that plays essential roles in many developmental processes, including cardiogenesis, neurogenesis, and osteogenesis. Induces cartilage and bone formation. Initiates the canonical BMP signaling cascade by associating with type I receptor BMPR1A and type II receptor BMPR2. Once all three components are bound together in a complex at the cell surface, BMPR2 phosphorylates and activates BMPR1A. In turn, BMPR1A propagates signal by phosphorylating SMAD1/5/8 that travel to the nucleus and act as activators and repressors of transcription of target genes. Also acts to promote expression of HAMP, via the interaction with its receptor BMPR1A/ALK3. Can also signal through non-canonical pathways such as ERK/MAP kinase signaling cascade that regulates osteoblast differentiation. Also stimulates the differentiation of myoblasts into osteoblasts via the EIF2AK3-EIF2A-ATF4 pathway by stimulating EIF2A phosphorylation which leads to increased expression of ATF4 which plays a central role in osteoblast differentiation. Acts as a positive regulator of odontoblast differentiation during mesenchymal tooth germ formation, expression is repressed during the bell stage by MSX1-mediated inhibition of CTNNB1 signaling. The polypeptide is Bone morphogenetic protein 2 (BMP2) (Oryctolagus cuniculus (Rabbit)).